The following is a 399-amino-acid chain: Probable dual-specificity RNA methyltransferase RlmN (399 aa).

Glu97 (proton acceptor) is an active-site residue. A Radical SAM core domain is found at Tyr103–Ser381. Cysteines 110 and 386 form a disulfide. Residues Cys117, Cys121, and Cys124 each coordinate [4Fe-4S] cluster. S-adenosyl-L-methionine is bound by residues Gly203–Glu204, Ser235, Ser258–His260, and Asn343. The active-site S-methylcysteine intermediate is the Cys386.

Belongs to the radical SAM superfamily. RlmN family. Requires [4Fe-4S] cluster as cofactor.

The protein resides in the cytoplasm. The catalysed reaction is adenosine(2503) in 23S rRNA + 2 reduced [2Fe-2S]-[ferredoxin] + 2 S-adenosyl-L-methionine = 2-methyladenosine(2503) in 23S rRNA + 5'-deoxyadenosine + L-methionine + 2 oxidized [2Fe-2S]-[ferredoxin] + S-adenosyl-L-homocysteine. The enzyme catalyses adenosine(37) in tRNA + 2 reduced [2Fe-2S]-[ferredoxin] + 2 S-adenosyl-L-methionine = 2-methyladenosine(37) in tRNA + 5'-deoxyadenosine + L-methionine + 2 oxidized [2Fe-2S]-[ferredoxin] + S-adenosyl-L-homocysteine. Functionally, specifically methylates position 2 of adenine 2503 in 23S rRNA and position 2 of adenine 37 in tRNAs. This chain is Probable dual-specificity RNA methyltransferase RlmN, found in Roseiflexus sp. (strain RS-1).